Reading from the N-terminus, the 248-residue chain is tRNA pseudouridine synthase A (248 aa).

Catalysis depends on aspartate 53, which acts as the Nucleophile. Tyrosine 111 is a substrate binding site.

It belongs to the tRNA pseudouridine synthase TruA family. In terms of assembly, homodimer.

It catalyses the reaction uridine(38/39/40) in tRNA = pseudouridine(38/39/40) in tRNA. Its function is as follows. Formation of pseudouridine at positions 38, 39 and 40 in the anticodon stem and loop of transfer RNAs. This chain is tRNA pseudouridine synthase A, found in Listeria innocua serovar 6a (strain ATCC BAA-680 / CLIP 11262).